We begin with the raw amino-acid sequence, 172 residues long: Protein-export protein SecB (172 aa).

Belongs to the SecB family. In terms of assembly, homotetramer, a dimer of dimers. One homotetramer interacts with 1 SecA dimer.

Its subcellular location is the cytoplasm. In terms of biological role, one of the proteins required for the normal export of preproteins out of the cell cytoplasm. It is a molecular chaperone that binds to a subset of precursor proteins, maintaining them in a translocation-competent state. It also specifically binds to its receptor SecA. In Ralstonia pickettii (strain 12J), this protein is Protein-export protein SecB.